A 37-amino-acid polypeptide reads, in one-letter code: Large ribosomal subunit protein bL36 (37 aa).

It belongs to the bacterial ribosomal protein bL36 family.

The polypeptide is Large ribosomal subunit protein bL36 (Nitrosococcus oceani (strain ATCC 19707 / BCRC 17464 / JCM 30415 / NCIMB 11848 / C-107)).